The chain runs to 236 residues: Phosphoribosylaminoimidazole-succinocarboxamide synthase (236 aa).

Belongs to the SAICAR synthetase family.

The catalysed reaction is 5-amino-1-(5-phospho-D-ribosyl)imidazole-4-carboxylate + L-aspartate + ATP = (2S)-2-[5-amino-1-(5-phospho-beta-D-ribosyl)imidazole-4-carboxamido]succinate + ADP + phosphate + 2 H(+). It functions in the pathway purine metabolism; IMP biosynthesis via de novo pathway; 5-amino-1-(5-phospho-D-ribosyl)imidazole-4-carboxamide from 5-amino-1-(5-phospho-D-ribosyl)imidazole-4-carboxylate: step 1/2. This chain is Phosphoribosylaminoimidazole-succinocarboxamide synthase, found in Pseudomonas putida (strain W619).